Here is a 264-residue protein sequence, read N- to C-terminus: Acetylglutamate kinase (264 aa).

Residues glycine 40 to glycine 41, arginine 62, and asparagine 158 contribute to the substrate site.

This sequence belongs to the acetylglutamate kinase family. ArgB subfamily.

The protein resides in the cytoplasm. The catalysed reaction is N-acetyl-L-glutamate + ATP = N-acetyl-L-glutamyl 5-phosphate + ADP. It functions in the pathway amino-acid biosynthesis; L-arginine biosynthesis; N(2)-acetyl-L-ornithine from L-glutamate: step 2/4. Functionally, catalyzes the ATP-dependent phosphorylation of N-acetyl-L-glutamate. In Cytophaga hutchinsonii (strain ATCC 33406 / DSM 1761 / CIP 103989 / NBRC 15051 / NCIMB 9469 / D465), this protein is Acetylglutamate kinase.